A 191-amino-acid chain; its full sequence is CASP-like protein 2U4 (191 aa).

The Cytoplasmic segment spans residues 1–25 (MGAYDGAEAPRAAPASTAANSRPSR). A helical transmembrane segment spans residues 26-46 (LLLLHSLLLRLVAVVLSILVI). At 47–68 (AVMVHAKQRVMIFKAEWDNSKA) the chain is on the extracellular side. Residues 69–89 (FVALVTISAICLGYSFLQFIL) traverse the membrane as a helical segment. Residues 90–114 (SAFHLCSKSWKSPTKCWAWMNFIAD) lie on the Cytoplasmic side of the membrane. Residues 115 to 135 (QILTYAMLGAAAAAAELAYIA) traverse the membrane as a helical segment. Topologically, residues 136 to 157 (KNGSSRAQWQPICSTFNTFCTR) are extracellular. An N-linked (GlcNAc...) asparagine glycan is attached at Asn-137. Residues 158–178 (AGASIILSFIAVLALANSSAI) form a helical membrane-spanning segment. Over 179–191 (SAYHLFRRPSSSV) the chain is Cytoplasmic.

It belongs to the Casparian strip membrane proteins (CASP) family. As to quaternary structure, homodimer and heterodimers.

The protein resides in the cell membrane. This is CASP-like protein 2U4 from Selaginella moellendorffii (Spikemoss).